The sequence spans 86 residues: MGILIPLVSVSAFWAIIGFGGPWIVPKGPNRGIIQLMIIMTAVCCWMFWIMVFLHQLNPLIGPQINVKTIRWISEKWGDAPNVINN.

Residues 1–21 traverse the membrane as a helical segment; that stretch reads MGILIPLVSVSAFWAIIGFGG. At 22 to 32 the chain is on the cytoplasmic side; that stretch reads PWIVPKGPNRG. The chain crosses the membrane as a helical span at residues 33–53; that stretch reads IIQLMIIMTAVCCWMFWIMVF. Residues 54–86 lie on the Lumenal side of the membrane; the sequence is LHQLNPLIGPQINVKTIRWISEKWGDAPNVINN.

This sequence belongs to the V-ATPase e1/e2 subunit family. As to quaternary structure, V-ATPase is a heteromultimeric enzyme made up of two complexes: the ATP-hydrolytic V1 complex and the proton translocation V0 complex. The V1 complex consists of three catalytic AB heterodimers that form a heterohexamer, three peripheral stalks each consisting of EG heterodimers, one central rotor including subunits D and F, and the regulatory subunits C and H. The proton translocation complex V0 consists of the proton transport subunit a, a ring of proteolipid subunits c9c'', rotary subunit d, subunits e and f, and the accessory subunits vah-19/Ac45 and vah-20/PRR.

It is found in the apical cell membrane. Its function is as follows. Subunit of the V0 complex of vacuolar(H+)-ATPase (V-ATPase), a multisubunit enzyme composed of a peripheral complex (V1) that hydrolyzes ATP and a membrane integral complex (V0) that translocates protons. V-ATPase is responsible for acidifying and maintaining the pH of intracellular compartments and in some cell types, is targeted to the plasma membrane, where it is responsible for acidifying the extracellular environment. During embryonic development, the V-ATPase is required to repress fusion of epidermal cells probably by negatively regulating eff-1-mediated cell fusion. This Caenorhabditis elegans protein is V-type proton ATPase subunit e.